Here is an 89-residue protein sequence, read N- to C-terminus: Small ribosomal subunit protein uS15 (89 aa).

The protein belongs to the universal ribosomal protein uS15 family. Part of the 30S ribosomal subunit. Forms a bridge to the 50S subunit in the 70S ribosome, contacting the 23S rRNA.

One of the primary rRNA binding proteins, it binds directly to 16S rRNA where it helps nucleate assembly of the platform of the 30S subunit by binding and bridging several RNA helices of the 16S rRNA. Functionally, forms an intersubunit bridge (bridge B4) with the 23S rRNA of the 50S subunit in the ribosome. The sequence is that of Small ribosomal subunit protein uS15 from Caulobacter sp. (strain K31).